The sequence spans 409 residues: Elongation factor Tu (409 aa).

The region spanning K10–E214 is the tr-type G domain. The tract at residues G19–T26 is G1. G19–T26 contacts GTP. T26 contacts Mg(2+). Residues G60 to N64 form a G2 region. The segment at D81–G84 is G3. Residues D81–H85 and N136–D139 each bind GTP. The interval N136–D139 is G4. A G5 region spans residues S174–L176.

The protein belongs to the TRAFAC class translation factor GTPase superfamily. Classic translation factor GTPase family. EF-Tu/EF-1A subfamily. Monomer.

It is found in the cytoplasm. It carries out the reaction GTP + H2O = GDP + phosphate + H(+). Its function is as follows. GTP hydrolase that promotes the GTP-dependent binding of aminoacyl-tRNA to the A-site of ribosomes during protein biosynthesis. The sequence is that of Elongation factor Tu from Trichormus variabilis (strain ATCC 29413 / PCC 7937) (Anabaena variabilis).